Here is a 103-residue protein sequence, read N- to C-terminus: Co-chaperonin GroES (103 aa).

The protein belongs to the GroES chaperonin family. As to quaternary structure, heptamer of 7 subunits arranged in a ring. Interacts with the chaperonin GroEL.

It localises to the cytoplasm. Functionally, together with the chaperonin GroEL, plays an essential role in assisting protein folding. The GroEL-GroES system forms a nano-cage that allows encapsulation of the non-native substrate proteins and provides a physical environment optimized to promote and accelerate protein folding. GroES binds to the apical surface of the GroEL ring, thereby capping the opening of the GroEL channel. This is Co-chaperonin GroES from Prochlorococcus marinus (strain MIT 9215).